Reading from the N-terminus, the 395-residue chain is FAD-dependent monooxygenase cctM (395 aa).

The first 23 residues, 1–23 (MEPGTDVRRVLVIGAGAAGLLIA), serve as a signal peptide directing secretion. Residues Glu37, Gly52, and Arg112 each contribute to the FAD site. Residues Asn138 and Asn298 are each glycosylated (N-linked (GlcNAc...) asparagine). Asp306 is an FAD binding site.

It belongs to the paxM FAD-dependent monooxygenase family. FAD is required as a cofactor.

It functions in the pathway mycotoxin biosynthesis. Its function is as follows. FAD-dependent monooxygenase; part of the gene cluster that mediates the biosynthesis of the mycotoxin cyclochlorotine, a hepatotoxic and carcinogenic cyclic chlorinated pentapeptide. The function of cctM within the pathway, if any, remains undetermined. The NRPS cctN initially catalyzes the condensation of L-serine (Ser), Pro, L-2-aminobutyrate (2Abu), Ser, and beta-Phe in this order to produce isocyclotine. After the dichlorination of Pro2 catalyzed by cctP2 to produce isocyclochlorotine, the cctO-mediated transacylation of isocyclochlorotine can furnish cyclochlorotine. The subsequent hydroxylation of cyclochlorotine by cctR yields hydroxycyclochlorotine as the final product. CctP1 probably acts as a phenylalanine aminomutase and provides the uncommon building block beta-Phe. Furthermore, 2Abu can be synthesized from threonine by one of the threonine dehydratases and transaminases localized outside of the cluster. The functions of the remaining proteins encoded by the cluster, cctM and cctT, have not been identified yet. The protein is FAD-dependent monooxygenase cctM of Talaromyces islandicus (Penicillium islandicum).